Consider the following 195-residue polypeptide: Imidazoleglycerol-phosphate dehydratase (195 aa).

It belongs to the imidazoleglycerol-phosphate dehydratase family.

The protein resides in the cytoplasm. It carries out the reaction D-erythro-1-(imidazol-4-yl)glycerol 3-phosphate = 3-(imidazol-4-yl)-2-oxopropyl phosphate + H2O. It functions in the pathway amino-acid biosynthesis; L-histidine biosynthesis; L-histidine from 5-phospho-alpha-D-ribose 1-diphosphate: step 6/9. The sequence is that of Imidazoleglycerol-phosphate dehydratase from Methylorubrum extorquens (strain CM4 / NCIMB 13688) (Methylobacterium extorquens).